A 708-amino-acid chain; its full sequence is Fatty acid oxidation complex subunit alpha (708 aa).

An enoyl-CoA hydratase region spans residues 1 to 191 (MDNNNAFQLS…KLGVVDACVP (191 aa)). The 3-hydroxyacyl-CoA dehydrogenase stretch occupies residues 311–708 (APVAAVGVLG…RAGLGEKFYP (398 aa)).

This sequence in the N-terminal section; belongs to the enoyl-CoA hydratase/isomerase family. In the central section; belongs to the 3-hydroxyacyl-CoA dehydrogenase family. As to quaternary structure, heterotetramer of two alpha chains (FadJ) and two beta chains (FadI).

It localises to the cytoplasm. The enzyme catalyses a (3S)-3-hydroxyacyl-CoA = a (2E)-enoyl-CoA + H2O. It carries out the reaction a 4-saturated-(3S)-3-hydroxyacyl-CoA = a (3E)-enoyl-CoA + H2O. It catalyses the reaction a (3S)-3-hydroxyacyl-CoA + NAD(+) = a 3-oxoacyl-CoA + NADH + H(+). The catalysed reaction is (3S)-3-hydroxybutanoyl-CoA = (3R)-3-hydroxybutanoyl-CoA. Its pathway is lipid metabolism; fatty acid beta-oxidation. Catalyzes the formation of a hydroxyacyl-CoA by addition of water on enoyl-CoA. Also exhibits 3-hydroxyacyl-CoA epimerase and 3-hydroxyacyl-CoA dehydrogenase activities. The polypeptide is Fatty acid oxidation complex subunit alpha (Vibrio cholerae serotype O1 (strain ATCC 39315 / El Tor Inaba N16961)).